The sequence spans 157 residues: 2-C-methyl-D-erythritol 2,4-cyclodiphosphate synthase (157 aa).

A divalent metal cation-binding residues include aspartate 8 and histidine 10. 4-CDP-2-C-methyl-D-erythritol 2-phosphate contacts are provided by residues 8–10 (DVH) and 34–35 (HS). Residue histidine 42 coordinates a divalent metal cation. Residues 56-58 (DIG), 61-65 (FPDTD), 100-106 (AQAPKMA), 132-135 (TTTE), phenylalanine 139, and arginine 142 contribute to the 4-CDP-2-C-methyl-D-erythritol 2-phosphate site.

This sequence belongs to the IspF family. In terms of assembly, homotrimer. Requires a divalent metal cation as cofactor.

It carries out the reaction 4-CDP-2-C-methyl-D-erythritol 2-phosphate = 2-C-methyl-D-erythritol 2,4-cyclic diphosphate + CMP. It functions in the pathway isoprenoid biosynthesis; isopentenyl diphosphate biosynthesis via DXP pathway; isopentenyl diphosphate from 1-deoxy-D-xylulose 5-phosphate: step 4/6. Functionally, involved in the biosynthesis of isopentenyl diphosphate (IPP) and dimethylallyl diphosphate (DMAPP), two major building blocks of isoprenoid compounds. Catalyzes the conversion of 4-diphosphocytidyl-2-C-methyl-D-erythritol 2-phosphate (CDP-ME2P) to 2-C-methyl-D-erythritol 2,4-cyclodiphosphate (ME-CPP) with a corresponding release of cytidine 5-monophosphate (CMP). The polypeptide is 2-C-methyl-D-erythritol 2,4-cyclodiphosphate synthase (Pseudomonas putida (strain GB-1)).